Consider the following 141-residue polypeptide: Hemoglobin subunit alpha (141 aa).

The 141-residue stretch at 1–141 (VLSAADKTNV…VATVLTSKYR (141 aa)) folds into the Globin domain. Ser3 carries the post-translational modification Phosphoserine. Lys7 carries the N6-succinyllysine modification. Thr8 is subject to Phosphothreonine. Lys11 is modified (N6-succinyllysine). Lys16 is modified (N6-acetyllysine; alternate). Lys16 carries the post-translational modification N6-succinyllysine; alternate. The residue at position 24 (Tyr24) is a Phosphotyrosine. The residue at position 35 (Ser35) is a Phosphoserine. Lys40 bears the N6-succinyllysine mark. Ser49 carries the phosphoserine modification. His58 provides a ligand contact to O2. His87 serves as a coordination point for heme b. The residue at position 102 (Ser102) is a Phosphoserine. Thr108 is subject to Phosphothreonine. A Phosphoserine modification is found at Ser124. Thr134 and Thr137 each carry phosphothreonine. Residue Ser138 is modified to Phosphoserine.

The protein belongs to the globin family. In terms of assembly, heterotetramer of two alpha chains and two beta chains. Red blood cells.

Involved in oxygen transport from the lung to the various peripheral tissues. Functionally, hemopressin acts as an antagonist peptide of the cannabinoid receptor CNR1. Hemopressin-binding efficiently blocks cannabinoid receptor CNR1 and subsequent signaling. The sequence is that of Hemoglobin subunit alpha (HBA) from Ctenodactylus gundi (Northern gundi).